We begin with the raw amino-acid sequence, 152 residues long: Endoribonuclease YbeY (152 aa).

3 residues coordinate Zn(2+): histidine 113, histidine 117, and histidine 123.

Belongs to the endoribonuclease YbeY family. Zn(2+) is required as a cofactor.

It is found in the cytoplasm. Its function is as follows. Single strand-specific metallo-endoribonuclease involved in late-stage 70S ribosome quality control and in maturation of the 3' terminus of the 16S rRNA. The protein is Endoribonuclease YbeY of Paracidovorax citrulli (strain AAC00-1) (Acidovorax citrulli).